Here is a 343-residue protein sequence, read N- to C-terminus: MKIKALSKLKPEEGIWMTEVDKPVLGHNDLLIKIKKTAICGTDVHIYNWDEWSQKTIPVPMVVGHEYVGEVVGIGQEVRGFEIGDRVSGEGHITCGHCRNCRGGRTHLCRNTIGVGVNRTGCFSEYLVIPAFNAFKIPANISDDLASIFDPFGNAVHTALSFDLVGEDVLITGAGPIGIMAAAVAKHVGARHVVITDVNEYRLDLARKMGVTRAVNVAEQKLDDVMAELGMTEGFDVGLEMSGNPSAFNSMLKTMNHGGRIALLGIPPSDMGIDWNQVIFKGLVIKGIYGREMFETWYKMASLIQSGLDLTPIITHHFKVDDFQQGFDIMRSGMSGKVILDWE.

Residue cysteine 40 coordinates Zn(2+). Catalysis depends on charge relay system residues threonine 42 and histidine 45. Histidine 65, glutamate 66, cysteine 95, cysteine 98, cysteine 101, and cysteine 109 together coordinate Zn(2+). NAD(+) contacts are provided by residues isoleucine 177, aspartate 197, arginine 202, 264-266 (LGI), and 288-289 (IY).

It belongs to the zinc-containing alcohol dehydrogenase family. Homotetramer. The cofactor is Zn(2+).

Its subcellular location is the cytoplasm. It carries out the reaction L-threonine + NAD(+) = (2S)-2-amino-3-oxobutanoate + NADH + H(+). The protein operates within amino-acid degradation; L-threonine degradation via oxydo-reductase pathway; glycine from L-threonine: step 1/2. Functionally, catalyzes the NAD(+)-dependent oxidation of L-threonine to 2-amino-3-ketobutyrate. In Vibrio vulnificus (strain CMCP6), this protein is L-threonine 3-dehydrogenase.